Here is a 156-residue protein sequence, read N- to C-terminus: ATP synthase subunit b (156 aa).

The chain crosses the membrane as a helical span at residues 5 to 25 (VTLIGQTVAFIIFVWFCMKFV).

This sequence belongs to the ATPase B chain family. As to quaternary structure, F-type ATPases have 2 components, F(1) - the catalytic core - and F(0) - the membrane proton channel. F(1) has five subunits: alpha(3), beta(3), gamma(1), delta(1), epsilon(1). F(0) has three main subunits: a(1), b(2) and c(10-14). The alpha and beta chains form an alternating ring which encloses part of the gamma chain. F(1) is attached to F(0) by a central stalk formed by the gamma and epsilon chains, while a peripheral stalk is formed by the delta and b chains.

Its subcellular location is the cell inner membrane. Its function is as follows. F(1)F(0) ATP synthase produces ATP from ADP in the presence of a proton or sodium gradient. F-type ATPases consist of two structural domains, F(1) containing the extramembraneous catalytic core and F(0) containing the membrane proton channel, linked together by a central stalk and a peripheral stalk. During catalysis, ATP synthesis in the catalytic domain of F(1) is coupled via a rotary mechanism of the central stalk subunits to proton translocation. Functionally, component of the F(0) channel, it forms part of the peripheral stalk, linking F(1) to F(0). This Shewanella loihica (strain ATCC BAA-1088 / PV-4) protein is ATP synthase subunit b.